Consider the following 54-residue polypeptide: Large ribosomal subunit protein bL33 (54 aa).

Belongs to the bacterial ribosomal protein bL33 family.

The chain is Large ribosomal subunit protein bL33 from Elusimicrobium minutum (strain Pei191).